Here is a 145-residue protein sequence, read N- to C-terminus: uncharacterized protein (145 aa).

4 consecutive transmembrane segments (helical) span residues 1–21 (MELF…YFLI), 28–48 (TVLI…MGAL), 54–74 (SMTS…AYVM), and 96–116 (FFLI…IPSA).

This sequence belongs to the DcuC/DcuD transporter (TC 2.A.61) family.

The protein resides in the cell membrane. This is an uncharacterized protein from Haemophilus influenzae (strain ATCC 51907 / DSM 11121 / KW20 / Rd).